The sequence spans 423 residues: MAIPWVEKYRPKTFEEIVNQEEAKYTLASWICAKFKAPREFCTRWAKKKDKEIVEAKAVLLAGPPGIGKTTIVHALAREIKYELIELNASDVRTGERIKQVVGRGLREASLFGYEGKLVLFDEVDGLHVKEDLGGLETIVEIIEIAKVPVIMTANNPYDPKFRPLRDIALVINLKRLSEDDVVEVLRRICANEGAKCEEEALRSIAKSSLGDLRAAINDLQMYLSSGKKILTVDDIKRVGERNPQLSMFEILDRVYRARWFDEARAISFNPSFDWEQYFLWALETIPTVYKDLELMAIAYDRLSKADMFLGRIKKTQEWELLPYALELSLGGISQVKNKPRLPPFIKYGFPQRLLLLAKSKEARRRREALVEYLAQNLHVSKSFVKSELIYVLSAIAKKDHSIIDRLSKALGINALDIKNLLL.

63 to 70 (GPPGIGKT) is a binding site for ATP.

It belongs to the activator 1 small subunits family. RfcL subfamily. In terms of assembly, heteromultimer composed of small subunits (RfcS) and large subunits (RfcL).

Functionally, part of the RFC clamp loader complex which loads the PCNA sliding clamp onto DNA. In Pyrobaculum islandicum (strain DSM 4184 / JCM 9189 / GEO3), this protein is Replication factor C large subunit.